The sequence spans 151 residues: Acidic phospholipase A2 2 (151 aa).

The signal sequence occupies residues 1–27 (MYPAHLLVLLAVCVSLLGAASIPARPL). 7 disulfides stabilise this stretch: Cys-38–Cys-104, Cys-54–Cys-151, Cys-56–Cys-72, Cys-71–Cys-132, Cys-78–Cys-125, Cys-88–Cys-118, and Cys-111–Cys-123. Tyr-55, Gly-57, and Gly-59 together coordinate Ca(2+). The active site involves His-75. Asp-76 is a Ca(2+) binding site. Residue Asp-126 is part of the active site.

It belongs to the phospholipase A2 family. Group I subfamily. D49 sub-subfamily. It depends on Ca(2+) as a cofactor. As to expression, expressed by the venom gland.

The protein localises to the secreted. The catalysed reaction is a 1,2-diacyl-sn-glycero-3-phosphocholine + H2O = a 1-acyl-sn-glycero-3-phosphocholine + a fatty acid + H(+). PLA2 catalyzes the calcium-dependent hydrolysis of the 2-acyl groups in 3-sn-phosphoglycerides. The chain is Acidic phospholipase A2 2 from Tropidechis carinatus (Australian rough-scaled snake).